The primary structure comprises 320 residues: Cytochrome f (320 aa).

The signal sequence occupies residues 1-35; that stretch reads MQTRNTFSWIREEITRSISVSLMIYIITWASISSA. Heme contacts are provided by tyrosine 36, cysteine 56, cysteine 59, and histidine 60. A helical transmembrane segment spans residues 286-306; sequence VQGLLFFLGSVVLAQIFLVLK.

It belongs to the cytochrome f family. The 4 large subunits of the cytochrome b6-f complex are cytochrome b6, subunit IV (17 kDa polypeptide, petD), cytochrome f and the Rieske protein, while the 4 small subunits are PetG, PetL, PetM and PetN. The complex functions as a dimer. The cofactor is heme.

It is found in the plastid. Its subcellular location is the chloroplast thylakoid membrane. In terms of biological role, component of the cytochrome b6-f complex, which mediates electron transfer between photosystem II (PSII) and photosystem I (PSI), cyclic electron flow around PSI, and state transitions. In Nasturtium officinale (Watercress), this protein is Cytochrome f.